Reading from the N-terminus, the 535-residue chain is UDP-glucuronosyltransferase 1A1 (535 aa).

The first 29 residues, 1–29, serve as a signal peptide directing secretion; sequence MTVVCWSSRLLLLLPYLLLCVFGPSASHA. 3 N-linked (GlcNAc...) asparagine glycosylation sites follow: Asn-89, Asn-297, and Asn-435. The chain crosses the membrane as a helical span at residues 493–509; it reads VIGFLLAIVLTVVFIVF.

Belongs to the UDP-glycosyltransferase family. Homodimers. Homooligomer. Interacts with UGT1A3, UGT1A4, UGT1A6, UGT1A7, UGT1A8, UGT1A9 and UGT1A10 to form heterodimers. As to expression, highly expressed in liver and at lower levels in colon, kidney, stomach and intestine.

The protein localises to the endoplasmic reticulum membrane. The enzyme catalyses glucuronate acceptor + UDP-alpha-D-glucuronate = acceptor beta-D-glucuronoside + UDP + H(+). It catalyses the reaction 17beta-estradiol + UDP-alpha-D-glucuronate = 17beta-estradiol 3-O-(beta-D-glucuronate) + UDP + H(+). The catalysed reaction is 2-hydroxyestrone + UDP-alpha-D-glucuronate = 2-hydroxyestrone 3-O-(beta-D-glucuronate) + UDP + H(+). It carries out the reaction 2-hydroxy-17beta-estradiol + UDP-alpha-D-glucuronate = 2-hydroxy-17beta-estradiol 3-O-(beta-D-glucuronate) + UDP + H(+). The enzyme catalyses 2-methoxy-17beta-estradiol + UDP-alpha-D-glucuronate = 2-methoxy-17beta-estradiol 3-O-(beta-D-glucuronate) + UDP + H(+). It catalyses the reaction 17alpha-estradiol + UDP-alpha-D-glucuronate = 17alpha-estradiol 3-O-(beta-D-glucuronate) + UDP + H(+). The catalysed reaction is 16beta,17beta-estriol + UDP-alpha-D-glucuronate = 16beta,17beta-estriol 16-O-(beta-D-glucuronate) + UDP + H(+). It carries out the reaction losartan + UDP-alpha-D-glucuronate = losartan-2-N-beta-D-glucuronide + UDP. The enzyme catalyses prunetin + UDP-alpha-D-glucuronate = prunetin-4'-O-beta-D-glucuronide + UDP. It catalyses the reaction SN-38 + UDP-alpha-D-glucuronate = SN-38 O-beta-D-glucuronide + UDP + H(+). The catalysed reaction is (4Z,15Z)-bilirubin IXalpha + UDP-alpha-D-glucuronate = (4Z,15Z)-bilirubin IXalpha C12-beta-D-glucuronoside + UDP. It carries out the reaction (4Z,15Z)-bilirubin IXalpha + UDP-alpha-D-glucuronate = (4Z,15Z)-bilirubin IXalpha C8-beta-D-glucuronoside + UDP. The enzyme catalyses (4Z,15Z)-bilirubin IXalpha C8-beta-D-glucuronoside + UDP-alpha-D-glucuronate = (4Z,15Z)-bilirubin IXalpha C8,C12-beta-D-bisglucuronoside + UDP. It catalyses the reaction (4Z,15Z)-bilirubin IXalpha C12-beta-D-glucuronoside + UDP-alpha-D-glucuronate = (4Z,15Z)-bilirubin IXalpha C8,C12-beta-D-bisglucuronoside + UDP. The catalysed reaction is 8-iso-prostaglandin F2alpha + UDP-alpha-D-glucuronate = 8-iso-prostaglandin F2alpha-glucuronide + UDP + H(+). It carries out the reaction (5Z,8Z,11Z,14Z)-eicosatetraenoate + UDP-alpha-D-glucuronate = O-[(5Z),(8Z),(11Z),(14Z)-eicosatetraenoyl]-beta-D-glucuronate + UDP. The enzyme catalyses 15-hydroxy-(5Z,8Z,11Z,13E)-eicosatetraenoate + UDP-alpha-D-glucuronate = 15-O-(beta-D-glucuronosyl)-(5Z,8Z,11Z,14Z)-eicosatetraenoate + UDP + H(+). It catalyses the reaction 20-hydroxy-(5Z,8Z,11Z,14Z)-eicosatetraenoate + UDP-alpha-D-glucuronate = 20-O-(beta-D-glucuronosyl)-(5Z,8Z,11Z,14Z)-eicosatetraenoate + UDP + H(+). The catalysed reaction is prostaglandin B1 + UDP-alpha-D-glucuronate = 15-O-(beta-D-glucuronosyl)-prostaglandin B1 + UDP + H(+). It carries out the reaction (E)-ferulate + UDP-alpha-D-glucuronate = (E)-4-O-(beta-D-glucuronosyl)-ferulate + UDP + H(+). The enzyme catalyses (E)-ferulate + UDP-alpha-D-glucuronate = (E)-ferulic acid beta-D-glucuronate ester + UDP. Functionally, UDP-glucuronosyltransferase (UGT) that catalyzes phase II biotransformation reactions in which lipophilic substrates are conjugated with glucuronic acid to increase the metabolite's water solubility, thereby facilitating excretion into either the urine or bile. Essential for the elimination and detoxification of drugs, xenobiotics and endogenous compounds. Catalyzes the glucuronidation of endogenous estrogen hormones such as estradiol, estrone and estriol. Involved in the glucuronidation of bilirubin, a degradation product occurring in the normal catabolic pathway that breaks down heme in vertebrates. Involved in the glucuronidation of arachidonic acid (AA) and AA-derived eicosanoids including 15-HETE, 20-HETE, PGB1 and F2-isoprostane (8-iso-PGF2alpha). Involved in the glucuronidation of the phytochemical ferulic acid at the phenolic or the carboxylic acid group. Also catalyzes the glucuronidation the isoflavones genistein, daidzein, glycitein, formononetin, biochanin A and prunetin, which are phytoestrogens with anticancer and cardiovascular properties. Involved in the glucuronidation of the AGTR1 angiotensin receptor antagonist losartan, a drug which can inhibit the effect of angiotensin II. Involved in the biotransformation of 7-ethyl-10-hydroxycamptothecin (SN-38), the pharmacologically active metabolite of the anticancer drug irinotecan. This Mus musculus (Mouse) protein is UDP-glucuronosyltransferase 1A1.